The primary structure comprises 89 residues: RNA-binding protein Hfq (89 aa).

One can recognise a Sm domain in the interval 9–68; that stretch reads DPFLNALRRERVPVSIYLVNGIKLQGQVESFDQFVILLKNTVSQMVYKHAISTVVPARAL.

Belongs to the Hfq family. In terms of assembly, homohexamer.

Functionally, RNA chaperone that binds small regulatory RNA (sRNAs) and mRNAs to facilitate mRNA translational regulation in response to envelope stress, environmental stress and changes in metabolite concentrations. Also binds with high specificity to tRNAs. In Shewanella denitrificans (strain OS217 / ATCC BAA-1090 / DSM 15013), this protein is RNA-binding protein Hfq.